A 248-amino-acid chain; its full sequence is tRNA (guanine-N(1)-)-methyltransferase (248 aa).

Residues G113 and 133 to 138 (IGDYVL) contribute to the S-adenosyl-L-methionine site.

It belongs to the RNA methyltransferase TrmD family. In terms of assembly, homodimer.

It localises to the cytoplasm. It catalyses the reaction guanosine(37) in tRNA + S-adenosyl-L-methionine = N(1)-methylguanosine(37) in tRNA + S-adenosyl-L-homocysteine + H(+). In terms of biological role, specifically methylates guanosine-37 in various tRNAs. The polypeptide is tRNA (guanine-N(1)-)-methyltransferase (Shewanella frigidimarina (strain NCIMB 400)).